Here is a 550-residue protein sequence, read N- to C-terminus: Hydroxylamine reductase (550 aa).

[2Fe-2S] cluster-binding residues include Cys-3, Cys-6, Cys-18, and Cys-25. Residues His-249, Glu-273, Cys-317, Cys-405, Cys-433, Cys-458, Glu-492, and Lys-494 each contribute to the hybrid [4Fe-2O-2S] cluster site. At Cys-405 the chain carries Cysteine persulfide.

This sequence belongs to the HCP family. The cofactor is [2Fe-2S] cluster. Requires hybrid [4Fe-2O-2S] cluster as cofactor.

The protein localises to the cytoplasm. The catalysed reaction is A + NH4(+) + H2O = hydroxylamine + AH2 + H(+). Its function is as follows. Catalyzes the reduction of hydroxylamine to form NH(3) and H(2)O. This Yersinia pseudotuberculosis serotype O:1b (strain IP 31758) protein is Hydroxylamine reductase.